A 285-amino-acid chain; its full sequence is uncharacterized protein (285 aa).

An ATP-grasp domain is found at 107 to 285 (FLTVDTTIFD…KHHLKRQMIP (179 aa)).

This is an uncharacterized protein from Mycoplasma pneumoniae (strain ATCC 29342 / M129 / Subtype 1) (Mycoplasmoides pneumoniae).